We begin with the raw amino-acid sequence, 291 residues long: Beta-lactamase CTX-M-6 (291 aa).

An N-terminal signal peptide occupies residues 1 to 28; it reads MMTQSIRRSMLTVMATLPLLFSSATLHA. The active-site Acyl-ester intermediate is serine 73. A substrate-binding site is contributed by 237–239; it reads KTG.

It belongs to the class-A beta-lactamase family.

The enzyme catalyses a beta-lactam + H2O = a substituted beta-amino acid. In terms of biological role, has cefotaxime-hydrolyzing activity. In Salmonella typhimurium, this protein is Beta-lactamase CTX-M-6 (bla).